A 754-amino-acid chain; its full sequence is Pentatricopeptide repeat-containing protein At3g53700, chloroplastic (754 aa).

A chloroplast-targeting transit peptide spans 1 to 72 (MAFSSCLKFY…DSAALRLFNL (72 aa)). PPR repeat units lie at residues 82–116 (EPAL…RCEM), 117–152 (GTST…GLKP), 153–187 (DTHF…GIKP), 188–222 (DVST…GLVP), 223–257 (DEKT…GCSW), 258–288 (SNVS…MSNQ), 294–328 (DQYT…GYDP), 329–363 (DVYT…DCSP), 364–398 (NTVT…GILP), 399–433 (DVCT…GCEP), 434–468 (DEFT…GCAR), 469–503 (SVIT…GVSR), 504–538 (NSVT…GQKP), 539–573 (DKYT…GCEP), 574–608 (DIVT…GINL), 609–643 (TPHA…NEAP), and 645–680 (DAVS…GFVP).

It belongs to the PPR family. P subfamily.

Its subcellular location is the plastid. The protein resides in the chloroplast. Its function is as follows. May be involved in female gametophyte development. In Arabidopsis thaliana (Mouse-ear cress), this protein is Pentatricopeptide repeat-containing protein At3g53700, chloroplastic (MEE40).